A 398-amino-acid chain; its full sequence is Probable aminomethyltransferase (398 aa).

It belongs to the GcvT family. The glycine cleavage system is composed of four proteins: P, T, L and H.

It carries out the reaction N(6)-[(R)-S(8)-aminomethyldihydrolipoyl]-L-lysyl-[protein] + (6S)-5,6,7,8-tetrahydrofolate = N(6)-[(R)-dihydrolipoyl]-L-lysyl-[protein] + (6R)-5,10-methylene-5,6,7,8-tetrahydrofolate + NH4(+). The glycine cleavage system catalyzes the degradation of glycine. The protein is Probable aminomethyltransferase of Thermococcus gammatolerans (strain DSM 15229 / JCM 11827 / EJ3).